The chain runs to 444 residues: Glutamate--tRNA ligase 2 (444 aa).

Residues 8 to 18 (PSPTGHLHAGN) carry the 'HIGH' region motif. Positions 241-245 (KLSKR) match the 'KMSKS' region motif. Lys-244 contributes to the ATP binding site.

Belongs to the class-I aminoacyl-tRNA synthetase family. Glutamate--tRNA ligase type 1 subfamily. Monomer.

It localises to the cytoplasm. It carries out the reaction tRNA(Glu) + L-glutamate + ATP = L-glutamyl-tRNA(Glu) + AMP + diphosphate. In terms of biological role, catalyzes the attachment of glutamate to tRNA(Glu) in a two-step reaction: glutamate is first activated by ATP to form Glu-AMP and then transferred to the acceptor end of tRNA(Glu). The chain is Glutamate--tRNA ligase 2 from Acidiphilium cryptum (strain JF-5).